The following is a 140-amino-acid chain: Actin-depolymerizing factor 10 (140 aa).

Ser-6 is modified (phosphoserine). In terms of domain architecture, ADF-H spans 7–139; the sequence is GMHVSDECKL…SLDIIKGRVN (133 aa).

The protein belongs to the actin-binding proteins ADF family.

The protein resides in the cytoplasm. It localises to the cytoskeleton. In terms of biological role, actin-depolymerizing protein. Severs actin filaments (F-actin) and binds to actin monomers. The chain is Actin-depolymerizing factor 10 (ADF10) from Arabidopsis thaliana (Mouse-ear cress).